A 182-amino-acid chain; its full sequence is UPF0301 protein NGK_1355 (182 aa).

This sequence belongs to the UPF0301 (AlgH) family.

In Neisseria gonorrhoeae (strain NCCP11945), this protein is UPF0301 protein NGK_1355.